The following is an 83-amino-acid chain: Small ribosomal subunit protein eS27 (83 aa).

The segment at 37 to 59 adopts a C4-type zinc-finger fold; that stretch reads CPGCFNITTVFSHAQTVVICGSC.

This sequence belongs to the eukaryotic ribosomal protein eS27 family. In terms of assembly, component of the small ribosomal subunit (SSU). Mature yeast ribosomes consist of a small (40S) and a large (60S) subunit. The 40S small subunit contains 1 molecule of ribosomal RNA (18S rRNA) and at least 33 different proteins. The large 60S subunit contains 3 rRNA molecules (25S, 5.8S and 5S rRNA) and at least 46 different proteins. It depends on Zn(2+) as a cofactor.

The protein resides in the cytoplasm. In terms of biological role, component of the ribosome, a large ribonucleoprotein complex responsible for the synthesis of proteins in the cell. The small ribosomal subunit (SSU) binds messenger RNAs (mRNAs) and translates the encoded message by selecting cognate aminoacyl-transfer RNA (tRNA) molecules. The large subunit (LSU) contains the ribosomal catalytic site termed the peptidyl transferase center (PTC), which catalyzes the formation of peptide bonds, thereby polymerizing the amino acids delivered by tRNAs into a polypeptide chain. The nascent polypeptides leave the ribosome through a tunnel in the LSU and interact with protein factors that function in enzymatic processing, targeting, and the membrane insertion of nascent chains at the exit of the ribosomal tunnel. The chain is Small ribosomal subunit protein eS27 (rps27) from Schizosaccharomyces pombe (strain 972 / ATCC 24843) (Fission yeast).